Here is a 506-residue protein sequence, read N- to C-terminus: Putative transporter SVOPL (506 aa).

10 consecutive transmembrane segments (helical) span residues 57–77 (SIGF…ANIV), 104–124 (ALVS…CGYI), 133–153 (VVFG…FSTS), 190–210 (LLPL…VLGM), 220–240 (WMIR…MFIP), 297–317 (TSLL…GSVL), 362–382 (LISC…LNIV), 397–417 (FFFM…LLFL), 444–464 (IGMG…PFIA), and 472–492 (VILA…GVFF).

It belongs to the major facilitator superfamily.

The protein localises to the membrane. The protein is Putative transporter SVOPL (svopl) of Danio rerio (Zebrafish).